A 285-amino-acid chain; its full sequence is Avenin-like b1 (285 aa).

The signal sequence occupies residues 1–18 (MKVFILALLALTATTAIA).

It belongs to the prolamin family. Contains disulfide bonds.

Its function is as follows. Seed storage protein. Might be integrated via inter-chain disulfide bonds within the glutenin polymer. The sequence is that of Avenin-like b1 (AVNLB) from Triticum aestivum (Wheat).